The chain runs to 91 residues: Bombyxin C-1 (91 aa).

An N-terminal signal peptide occupies residues 1–19 (MKLVMLLVVVSAMLVLGGA). Glutamine 20 bears the Pyrrolidone carboxylic acid mark. 3 disulfide bridges follow: cysteine 27-cysteine 76, cysteine 39-cysteine 89, and cysteine 75-cysteine 80. Positions 47–67 (SGSQYAGYGWPWLPPFSSSRG) are cleaved as a propeptide — c peptide like.

The protein belongs to the insulin family. Heterodimer of a B chain and an A chain linked by two disulfide bonds.

It is found in the secreted. Functionally, brain peptide responsible for activation of prothoracic glands to produce ecdysone in insects. The polypeptide is Bombyxin C-1 (BBXC1) (Bombyx mori (Silk moth)).